We begin with the raw amino-acid sequence, 232 residues long: Large ribosomal subunit protein uL1 (232 aa).

Belongs to the universal ribosomal protein uL1 family. In terms of assembly, part of the 50S ribosomal subunit.

Binds directly to 23S rRNA. The L1 stalk is quite mobile in the ribosome, and is involved in E site tRNA release. Functionally, protein L1 is also a translational repressor protein, it controls the translation of the L11 operon by binding to its mRNA. The polypeptide is Large ribosomal subunit protein uL1 (Hahella chejuensis (strain KCTC 2396)).